Reading from the N-terminus, the 354-residue chain is Phosphoribosylformylglycinamidine cyclo-ligase (354 aa).

The protein belongs to the AIR synthase family.

Its subcellular location is the cytoplasm. The enzyme catalyses 2-formamido-N(1)-(5-O-phospho-beta-D-ribosyl)acetamidine + ATP = 5-amino-1-(5-phospho-beta-D-ribosyl)imidazole + ADP + phosphate + H(+). Its pathway is purine metabolism; IMP biosynthesis via de novo pathway; 5-amino-1-(5-phospho-D-ribosyl)imidazole from N(2)-formyl-N(1)-(5-phospho-D-ribosyl)glycinamide: step 2/2. This is Phosphoribosylformylglycinamidine cyclo-ligase from Marinobacter nauticus (strain ATCC 700491 / DSM 11845 / VT8) (Marinobacter aquaeolei).